We begin with the raw amino-acid sequence, 98 residues long: NADH-ubiquinone oxidoreductase chain 4L (98 aa).

3 consecutive transmembrane segments (helical) span residues Met1–Met21, Ser29–Leu49, and Ile61–Val81.

Belongs to the complex I subunit 4L family. As to quaternary structure, core subunit of respiratory chain NADH dehydrogenase (Complex I) which is composed of 45 different subunits.

The protein localises to the mitochondrion inner membrane. It catalyses the reaction a ubiquinone + NADH + 5 H(+)(in) = a ubiquinol + NAD(+) + 4 H(+)(out). Functionally, core subunit of the mitochondrial membrane respiratory chain NADH dehydrogenase (Complex I) which catalyzes electron transfer from NADH through the respiratory chain, using ubiquinone as an electron acceptor. Part of the enzyme membrane arm which is embedded in the lipid bilayer and involved in proton translocation. This Ommatophoca rossii (Ross seal) protein is NADH-ubiquinone oxidoreductase chain 4L (MT-ND4L).